Reading from the N-terminus, the 678-residue chain is Zinc finger protein 334 (678 aa).

The KRAB domain occupies 8 to 79 (VSFQDLTVNF…EEFSNQNYPE (72 aa)). 14 consecutive C2H2-type zinc fingers follow at residues 235-257 (NEPC…QRIH), 263-285 (YVCN…QRIH), 291-313 (YECS…QKIH), 319-341 (YECN…FRSH), 347-369 (YECK…QRTH), 375-397 (NECK…QRIH), 403-425 (YECS…RRSH), 431-453 (YECS…QITH), 459-481 (YECN…QRTH), 542-564 (YECN…QRTH), 570-592 (YECN…QRTH), 598-620 (YERN…RRIH), 626-648 (YECN…QKIH), and 654-676 (YECN…QKSH).

Belongs to the krueppel C2H2-type zinc-finger protein family.

It localises to the nucleus. Functionally, may be involved in transcriptional regulation. The chain is Zinc finger protein 334 (ZNF334) from Pongo abelii (Sumatran orangutan).